The primary structure comprises 390 residues: Protein phosphatase 1B (390 aa).

The segment covering 1-14 has biased composition (basic and acidic residues); that stretch reads MGAFLDKPKTEKHN. A disordered region spans residues 1–20; it reads MGAFLDKPKTEKHNAHGAGN. The N-myristoyl glycine moiety is linked to residue Gly-2. Residue Lys-12 forms a Glycyl lysine isopeptide (Lys-Gly) (interchain with G-Cter in ISG15) linkage. A PPM-type phosphatase domain is found at 23–295; it reads RYGLSSMQGW…DNMSIVLVCF (273 aa). Residues Asp-60, Gly-61, Asp-243, and Asp-286 each coordinate Mn(2+). Residues 371–390 form a disordered region; that stretch reads NPNKDNDGGAGDLEDSLVAL. A Phosphoserine modification is found at Ser-386.

Belongs to the PP2C family. Monomer. Interacts with PAK6. Interacts with the phosphorylated form of IKBKB/IKKB. Mg(2+) is required as a cofactor. Requires Mn(2+) as cofactor. Isgylation negatively regulates its activity. In terms of processing, N-myristoylation is essential for the recognition of its substrates for dephosphorylation.

The protein localises to the cytoplasm. It localises to the cytosol. The protein resides in the membrane. It carries out the reaction O-phospho-L-seryl-[protein] + H2O = L-seryl-[protein] + phosphate. The enzyme catalyses O-phospho-L-threonyl-[protein] + H2O = L-threonyl-[protein] + phosphate. Its function is as follows. Enzyme with a broad specificity. Dephosphorylates PRKAA1 and PRKAA2. Inhibits TBK1-mediated antiviral signaling by dephosphorylating it at 'Ser-172'. Plays an important role in the termination of TNF-alpha-mediated NF-kappa-B activation through dephosphorylating and inactivating IKBKB/IKKB. The polypeptide is Protein phosphatase 1B (Ppm1b) (Rattus norvegicus (Rat)).